Here is a 240-residue protein sequence, read N- to C-terminus: 2,3,4,5-tetrahydropyridine-2,6-dicarboxylate N-acetyltransferase (240 aa).

It belongs to the transferase hexapeptide repeat family. DapH subfamily.

It catalyses the reaction (S)-2,3,4,5-tetrahydrodipicolinate + acetyl-CoA + H2O = L-2-acetamido-6-oxoheptanedioate + CoA. It participates in amino-acid biosynthesis; L-lysine biosynthesis via DAP pathway; LL-2,6-diaminopimelate from (S)-tetrahydrodipicolinate (acetylase route): step 1/3. Catalyzes the transfer of an acetyl group from acetyl-CoA to tetrahydrodipicolinate. This chain is 2,3,4,5-tetrahydropyridine-2,6-dicarboxylate N-acetyltransferase, found in Halalkalibacterium halodurans (strain ATCC BAA-125 / DSM 18197 / FERM 7344 / JCM 9153 / C-125) (Bacillus halodurans).